The primary structure comprises 415 residues: uncharacterized protein (415 aa).

Cys85, Cys91, Cys94, and Cys175 together coordinate [4Fe-4S] cluster. Gln248, Tyr276, Glu297, and Asn344 together coordinate S-adenosyl-L-methionine. Cys371 (nucleophile) is an active-site residue.

This sequence belongs to the class I-like SAM-binding methyltransferase superfamily. RNA M5U methyltransferase family.

This is an uncharacterized protein from Leptospira interrogans serogroup Icterohaemorrhagiae serovar copenhageni (strain Fiocruz L1-130).